A 944-amino-acid polypeptide reads, in one-letter code: E3 ubiquitin-protein ligase HACE1 (944 aa).

ANK repeat units follow at residues 23–55 (LPED…NSKF), 64–93 (VKRS…DPNY), 97–126 (SGCT…DVNI), 130–159 (EGLT…NVDV), 163–192 (MGQT…DINR), 196–226 (SGAT…YLPD), and 228–253 (NGVT…QHHP). One can recognise an HECT domain in the interval 609-944 (NCEKLKQGIA…HCGSYGYTMA (336 aa)). Cys911 functions as the Glycyl thioester intermediate in the catalytic mechanism.

The protein localises to the golgi apparatus. Its subcellular location is the golgi stack membrane. It is found in the cytoplasm. The protein resides in the endoplasmic reticulum. It catalyses the reaction S-ubiquitinyl-[E2 ubiquitin-conjugating enzyme]-L-cysteine + [acceptor protein]-L-lysine = [E2 ubiquitin-conjugating enzyme]-L-cysteine + N(6)-ubiquitinyl-[acceptor protein]-L-lysine.. It participates in protein modification; protein ubiquitination. Functionally, E3 ubiquitin-protein ligase involved in Golgi membrane fusion and regulation of small GTPases. Acts as a regulator of Golgi membrane dynamics during the cell cycle: recruited to Golgi membrane by Rab proteins and regulates postmitotic Golgi membrane fusion. Acts by mediating ubiquitination during mitotic Golgi disassembly, ubiquitination serving as a signal for Golgi reassembly later, after cell division. The polypeptide is E3 ubiquitin-protein ligase HACE1 (hace1) (Xenopus laevis (African clawed frog)).